Reading from the N-terminus, the 61-residue chain is Small ribosomal subunit protein uS14 (61 aa).

Zn(2+) is bound by residues C24, C27, C40, and C43.

Belongs to the universal ribosomal protein uS14 family. Zinc-binding uS14 subfamily. In terms of assembly, part of the 30S ribosomal subunit. Contacts proteins S3 and S10. Requires Zn(2+) as cofactor.

In terms of biological role, binds 16S rRNA, required for the assembly of 30S particles and may also be responsible for determining the conformation of the 16S rRNA at the A site. The sequence is that of Small ribosomal subunit protein uS14 from Alkaliphilus oremlandii (strain OhILAs) (Clostridium oremlandii (strain OhILAs)).